Here is a 431-residue protein sequence, read N- to C-terminus: Hydroxylamine reductase (431 aa).

Residues C5, C8, C17, and C23 each contribute to the [4Fe-4S] cluster site. The hybrid [4Fe-2O-2S] cluster site is built by H131, E155, C199, C286, C314, C339, E373, and K375. C286 bears the Cysteine persulfide mark.

It belongs to the HCP family. Requires [4Fe-4S] cluster as cofactor. The cofactor is hybrid [4Fe-2O-2S] cluster.

Its subcellular location is the cytoplasm. It catalyses the reaction A + NH4(+) + H2O = hydroxylamine + AH2 + H(+). Functionally, catalyzes the reduction of hydroxylamine to form NH(3) and H(2)O. This is Hydroxylamine reductase from Thermotoga maritima (strain ATCC 43589 / DSM 3109 / JCM 10099 / NBRC 100826 / MSB8).